A 77-amino-acid chain; its full sequence is Large ribosomal subunit protein bL28 (77 aa).

This sequence belongs to the bacterial ribosomal protein bL28 family.

The polypeptide is Large ribosomal subunit protein bL28 (Acidovorax ebreus (strain TPSY) (Diaphorobacter sp. (strain TPSY))).